Consider the following 282-residue polypeptide: Pantothenate synthetase (282 aa).

30–37 provides a ligand contact to ATP; it reads MGALHAGH. H37 acts as the Proton donor in catalysis. Q61 contributes to the (R)-pantoate binding site. Position 61 (Q61) interacts with beta-alanine. 147–150 provides a ligand contact to ATP; it reads GEKD. Q153 provides a ligand contact to (R)-pantoate. Residues V176 and 184-187 contribute to the ATP site; that span reads LSSR.

The protein belongs to the pantothenate synthetase family. As to quaternary structure, homodimer.

Its subcellular location is the cytoplasm. The enzyme catalyses (R)-pantoate + beta-alanine + ATP = (R)-pantothenate + AMP + diphosphate + H(+). Its pathway is cofactor biosynthesis; (R)-pantothenate biosynthesis; (R)-pantothenate from (R)-pantoate and beta-alanine: step 1/1. Its function is as follows. Catalyzes the condensation of pantoate with beta-alanine in an ATP-dependent reaction via a pantoyl-adenylate intermediate. This chain is Pantothenate synthetase, found in Bacteroides thetaiotaomicron (strain ATCC 29148 / DSM 2079 / JCM 5827 / CCUG 10774 / NCTC 10582 / VPI-5482 / E50).